The following is a 398-amino-acid chain: Homeobox protein knotted-1-like 1 (398 aa).

Disordered regions lie at residues 43 to 69 (TFHL…PGTH), 172 to 192 (EFEA…DPEL), and 234 to 277 (NNNA…PRAE). Residues 49-58 (SGGGGGGGSG) show a composition bias toward gly residues. Residues 280–300 (ELKNHLLRKYSGYLSSLKQEL) form the ELK domain. Residues 301–364 (SKKKKKGKLP…NQRKRHWKPS (64 aa)) constitute a DNA-binding region (homeobox; TALE-type).

Belongs to the TALE/KNOX homeobox family. In terms of tissue distribution, expressed only in the stems.

The protein localises to the nucleus. Functionally, probably binds to the DNA sequence 5'-TGAC-3'. The polypeptide is Homeobox protein knotted-1-like 1 (Malus domestica (Apple)).